We begin with the raw amino-acid sequence, 311 residues long: tRNA dimethylallyltransferase (311 aa).

Position 11 to 18 (11 to 18 (GPTAVGKT)) interacts with ATP. Position 13–18 (13–18 (TAVGKT)) interacts with substrate. Positions 36–39 (DSMQ) are interaction with substrate tRNA.

The protein belongs to the IPP transferase family. Monomer. Requires Mg(2+) as cofactor.

It catalyses the reaction adenosine(37) in tRNA + dimethylallyl diphosphate = N(6)-dimethylallyladenosine(37) in tRNA + diphosphate. Catalyzes the transfer of a dimethylallyl group onto the adenine at position 37 in tRNAs that read codons beginning with uridine, leading to the formation of N6-(dimethylallyl)adenosine (i(6)A). The protein is tRNA dimethylallyltransferase of Clostridioides difficile (strain 630) (Peptoclostridium difficile).